The primary structure comprises 426 residues: Serine--tRNA ligase (426 aa).

229-231 (TAE) serves as a coordination point for L-serine. ATP is bound by residues 260–262 (RKE) and Val276. Glu283 lines the L-serine pocket. Position 349–352 (349–352 (EVTS)) interacts with ATP. L-serine is bound at residue Thr384.

It belongs to the class-II aminoacyl-tRNA synthetase family. Type-1 seryl-tRNA synthetase subfamily. Homodimer. The tRNA molecule binds across the dimer.

The protein localises to the cytoplasm. The catalysed reaction is tRNA(Ser) + L-serine + ATP = L-seryl-tRNA(Ser) + AMP + diphosphate + H(+). It carries out the reaction tRNA(Sec) + L-serine + ATP = L-seryl-tRNA(Sec) + AMP + diphosphate + H(+). It participates in aminoacyl-tRNA biosynthesis; selenocysteinyl-tRNA(Sec) biosynthesis; L-seryl-tRNA(Sec) from L-serine and tRNA(Sec): step 1/1. Its function is as follows. Catalyzes the attachment of serine to tRNA(Ser). Is also able to aminoacylate tRNA(Sec) with serine, to form the misacylated tRNA L-seryl-tRNA(Sec), which will be further converted into selenocysteinyl-tRNA(Sec). The polypeptide is Serine--tRNA ligase (Treponema pallidum (strain Nichols)).